The following is a 1256-amino-acid chain: Receptor tyrosine-protein kinase erbB-2 (1256 aa).

The signal sequence occupies residues 1–22; it reads MELAAWCRWGFLLALLSPGAAG. Residues 23–653 lie on the Extracellular side of the membrane; it reads TQVCTGTDMK…PAEQRASPVT (631 aa). C26 and C53 are oxidised to a cystine. 3 N-linked (GlcNAc...) asparagine glycosylation sites follow: N68, N125, and N188. Cystine bridges form between C163/C193, C196/C205, C200/C213, C221/C228, C225/C236, C237/C245, C241/C253, C256/C265, C269/C296, C300/C312, C316/C332, C335/C339, C343/C368, C476/C505, C512/C521, and C516/C529. N-linked (GlcNAc...) asparagine glycosylation occurs at N260. N531 is a glycosylation site (N-linked (GlcNAc...) asparagine). Disulfide bonds link C532–C541, C545–C561, C564–C577, C568–C585, C588–C597, C601–C624, C627–C635, and C631–C643. N572 carries an N-linked (GlcNAc...) asparagine glycan. N630 carries N-linked (GlcNAc...) asparagine glycosylation. The helical transmembrane segment at 654–674 threads the bilayer; it reads FIIATVVGVLLFLIIVVVIGI. The Cytoplasmic segment spans residues 675 to 1256; the sequence is LIKRRRQKIR…PEYLGLDVPV (582 aa). Residues 677-690 are required for interaction with KPNB1 and EEA1; the sequence is KRRRQKIRKYTMRR. The short motif at 677–690 is the Nuclear localization signal element; that stretch reads KRRRQKIRKYTMRR. One can recognise a Protein kinase domain in the interval 721–988; that stretch reads LRKLKVLGSG…RMARDPQRFV (268 aa). ATP contacts are provided by residues 727–735 and K754; that span reads LGSGAFGTV. D846 acts as the Proton acceptor in catalysis. At Y878 the chain carries Phosphotyrosine. Residues 1030-1180 form a disordered region; it reads GFFSPDPALG…PKTLSPGKNG (151 aa). Residues S1055, S1079, S1084, and S1108 each carry the phosphoserine modification. Y1113 carries the phosphotyrosine modification. Phosphotyrosine; by autocatalysis is present on Y1140. T1167 is subject to Phosphothreonine. An interaction with PIK3C2B region spans residues 1196-1198; it reads EYL. Y1197 carries the phosphotyrosine modification. Disordered regions lie at residues 1200–1219 and 1224–1256; these read PRAG…PAFD and WDQN…DVPV. Residue Y1249 is modified to Phosphotyrosine; by autocatalysis.

The protein belongs to the protein kinase superfamily. Tyr protein kinase family. EGF receptor subfamily. In terms of assembly, homodimer. Heterodimer with EGFR, ERBB3 and ERBB4. Part of a complex with EGFR and either PIK3C2A or PIK3C2B. May interact with PIK3C2B when phosphorylated on Tyr-1197. Interacts with PLXNB1. Interacts (when phosphorylated on Tyr-1249) with MEMO1. Interacts with MUC1. Interacts (when phosphorylated on Tyr-1140) with GRB7 (via SH2 domain). Interacts (when phosphorylated on Tyr-1249) with ERBIN. Interacts with KPNB1, RANBP2, EEA1, CRM1, CLTC, PTK6, RPA194 and ACTB. Interacts (preferentially with the tyrosine phosphorylated form) with CPNE3; this interaction occurs at the cell membrane and is increased in a growth factor heregulin-dependent manner. Interacts with HSP90AA1 and HSP90AB1 in an ATP-dependent manner; the interaction suppresses ERBB2 kinase activity. Interacts with SRC. Interacts with MYOC. Interacts with PRKCABP. Interacts with SORL1; this interaction regulates ERBB2 subcellular distribution by promoting its recycling after internalization from endosomes back to the plasma membrane, hence stimulates ERBB2-mediated signaling. Interacts with SH3BGRL. Interacts with ROR1. Post-translationally, autophosphorylated. Autophosphorylation occurs in trans, i.e. one subunit of the dimeric receptor phosphorylates tyrosine residues on the other subunit. Ligand-binding increases phosphorylation on tyrosine residues. Signaling via SEMA4C promotes phosphorylation at Tyr-1249. Dephosphorylated by PTPN12. In terms of tissue distribution, expressed predominantly in uterine epithelial cells. In the muscle, expression localizes to the synaptic sites of muscle fibers.

The protein resides in the cell membrane. Its subcellular location is the cell projection. It is found in the ruffle membrane. The protein localises to the early endosome. It localises to the cytoplasm. The protein resides in the perinuclear region. Its subcellular location is the nucleus. It carries out the reaction L-tyrosyl-[protein] + ATP = O-phospho-L-tyrosyl-[protein] + ADP + H(+). Protein tyrosine kinase that is part of several cell surface receptor complexes, but that apparently needs a coreceptor for ligand binding. Essential component of a neuregulin-receptor complex, although neuregulins do not interact with it alone. GP30 is a potential ligand for this receptor. Regulates outgrowth and stabilization of peripheral microtubules (MTs). Upon ERBB2 activation, the MEMO1-RHOA-DIAPH1 signaling pathway elicits the phosphorylation and thus the inhibition of GSK3B at cell membrane. This prevents the phosphorylation of APC and CLASP2, allowing its association with the cell membrane. In turn, membrane-bound APC allows the localization of MACF1 to the cell membrane, which is required for microtubule capture and stabilization. In terms of biological role, in the nucleus is involved in transcriptional regulation. Associates with the 5'-TCAAATTC-3' sequence in the PTGS2/COX-2 promoter and activates its transcription. Implicated in transcriptional activation of CDKN1A; the function involves STAT3 and SRC. Involved in the transcription of rRNA genes by RNA Pol I and enhances protein synthesis and cell growth. This is Receptor tyrosine-protein kinase erbB-2 (Erbb2) from Mus musculus (Mouse).